The sequence spans 368 residues: Biotin synthase (368 aa).

Residues 46–277 (VHGDEVALCG…AAHIFVMGGR (232 aa)) enclose the Radical SAM core domain. Positions 64, 68, and 71 each coordinate [4Fe-4S] cluster. [2Fe-2S] cluster-binding residues include S109, C142, and C202. The segment at 347 to 368 (RAAEPGGKRGLPVVGPPRGGCA) is disordered.

Belongs to the radical SAM superfamily. Biotin synthase family. As to quaternary structure, homodimer. The cofactor is [4Fe-4S] cluster. [2Fe-2S] cluster is required as a cofactor.

It catalyses the reaction (4R,5S)-dethiobiotin + (sulfur carrier)-SH + 2 reduced [2Fe-2S]-[ferredoxin] + 2 S-adenosyl-L-methionine = (sulfur carrier)-H + biotin + 2 5'-deoxyadenosine + 2 L-methionine + 2 oxidized [2Fe-2S]-[ferredoxin]. Its pathway is cofactor biosynthesis; biotin biosynthesis; biotin from 7,8-diaminononanoate: step 2/2. Catalyzes the conversion of dethiobiotin (DTB) to biotin by the insertion of a sulfur atom into dethiobiotin via a radical-based mechanism. The polypeptide is Biotin synthase (Anaeromyxobacter sp. (strain Fw109-5)).